Here is a 219-residue protein sequence, read N- to C-terminus: Apoptosis regulator OPG045 (219 aa).

It belongs to the orthopoxvirus OPG045 family. Homodimer. Interacts with host pro-apoptotic protein BCL2L11 (via BH3 domain). Interacts with host NLRP1. Interacts with host BAK.

It localises to the host mitochondrion outer membrane. Its subcellular location is the host cytoplasm. Functionally, plays a role in evading host innate immune response by inhibiting host inflammasome activation. Interacts with and inhibits NLR-mediated interleukin-1 beta/IL1B production in infected cells. At the host mitochondria outer membrane, interacts with the BH3 domain of host BAK and prevents BAK from binding active BAX. In turn, host apoptosis is inhibited. The polypeptide is Apoptosis regulator OPG045 (OPG045) (Cynomys gunnisoni (Gunnison's prairie dog)).